The following is a 472-amino-acid chain: ATP synthase subunit beta (472 aa).

An ATP-binding site is contributed by 157-164; sequence GGAGVGKT.

This sequence belongs to the ATPase alpha/beta chains family. F-type ATPases have 2 components, CF(1) - the catalytic core - and CF(0) - the membrane proton channel. CF(1) has five subunits: alpha(3), beta(3), gamma(1), delta(1), epsilon(1). CF(0) has three main subunits: a(1), b(2) and c(9-12). The alpha and beta chains form an alternating ring which encloses part of the gamma chain. CF(1) is attached to CF(0) by a central stalk formed by the gamma and epsilon chains, while a peripheral stalk is formed by the delta and b chains.

Its subcellular location is the cell membrane. It catalyses the reaction ATP + H2O + 4 H(+)(in) = ADP + phosphate + 5 H(+)(out). Produces ATP from ADP in the presence of a proton gradient across the membrane. The catalytic sites are hosted primarily by the beta subunits. This Desulforamulus reducens (strain ATCC BAA-1160 / DSM 100696 / MI-1) (Desulfotomaculum reducens) protein is ATP synthase subunit beta.